A 146-amino-acid polypeptide reads, in one-letter code: Cytochrome c-type biogenesis protein CcmE (146 aa).

Residues 1 to 8 (MHPKRKKR) lie on the Cytoplasmic side of the membrane. A helical; Signal-anchor for type II membrane protein membrane pass occupies residues 9-29 (LLIVLAGLAVVAVASGLILNA). Residues 30-146 (FRSNLVFFHT…IQRAGETVVQ (117 aa)) are Periplasmic-facing. Positions 124 and 128 each coordinate heme.

The protein belongs to the CcmE/CycJ family.

Its subcellular location is the cell inner membrane. Heme chaperone required for the biogenesis of c-type cytochromes. Transiently binds heme delivered by CcmC and transfers the heme to apo-cytochromes in a process facilitated by CcmF and CcmH. The protein is Cytochrome c-type biogenesis protein CcmE of Laribacter hongkongensis (strain HLHK9).